The primary structure comprises 338 residues: MPRAQLQRFLSGISAEGIRTVYLDPKDAAKAKLDAMHSSPSSRYVVLEGRAAKPRGKKVGRRFKILSNKDIDGVLQEAQKGLDFVITEVQDWKIIPLENMIAKLHKIHTRLYAVARSPAEVRKMFSILDVGVDGVIFTASTVGDVREALVHLGTKSFRLQPARITEIREVGDGERVCVDTASMLERGEGMLVGSRSNFMFLVHNESVGSSFTSPRPFRVNAGAVHSYTLGTDGNTLYLSEVETGTEVLVLDSHGRARRAAVGRSKIERRPMLMIKAEADGEIGGIIAQDAETIRFVRPGGGLVSVTHLKKGDKVLVHSKPAAGRHFGMEVADEYILEK.

The protein belongs to the archaeal-type DHQ synthase family.

It carries out the reaction 2-amino-2,3,7-trideoxy-D-lyxo-hept-6-ulosonate + NAD(+) + H2O = 3-dehydroquinate + NH4(+) + NADH + H(+). Catalyzes the oxidative deamination and cyclization of 2-amino-3,7-dideoxy-D-threo-hept-6-ulosonic acid (ADH) to yield 3-dehydroquinate (DHQ), which is fed into the canonical shikimic pathway of aromatic amino acid biosynthesis. The polypeptide is 3-dehydroquinate synthase (Cenarchaeum symbiosum (strain A)).